A 92-amino-acid polypeptide reads, in one-letter code: Small ribosomal subunit protein uS19 (92 aa).

This sequence belongs to the universal ribosomal protein uS19 family.

Functionally, protein S19 forms a complex with S13 that binds strongly to the 16S ribosomal RNA. The chain is Small ribosomal subunit protein uS19 from Granulibacter bethesdensis (strain ATCC BAA-1260 / CGDNIH1).